Here is a 617-residue protein sequence, read N- to C-terminus: Vacuolar protein sorting-associated protein 33B (617 aa).

Belongs to the STXBP/unc-18/SEC1 family. As to quaternary structure, interacts with vipas39. In terms of tissue distribution, widely expressed from 4 hours post-fertilization (hpf) to 24 hpf. At 48 hpf, localized to brain, retina, ear, liver and proximal intestine. This expression pattern is more pronounced at 72 hpf and persists through 5 days post-fertilization (dpf). At 3 dpf and 4 dpf, expression in the liver is predominantly in developing biliary epithelial cells. No expression detected in kidney or spinal cord.

The protein resides in the late endosome membrane. The protein localises to the lysosome membrane. Its function is as follows. May play a role in vesicle-mediated protein trafficking to lysosomal compartments and in membrane docking/fusion reactions of late endosomes/lysosomes. Required for proper trafficking and targeting of the collagen-modifying enzyme lysyl hydroxylase 3 (LH3) to intracellular collagen. Mediates phagolysosomal fusion in macrophages. Proposed to be involved in endosomal maturation implicating vipas39. In epithelial cells, the vps33b:vipas39 complex may play a role in the apical recycling pathway and in the maintenance of the apical-basolateral polarity. Plays a role in bile duct development. This is Vacuolar protein sorting-associated protein 33B from Danio rerio (Zebrafish).